The primary structure comprises 548 residues: Natural resistance-associated macrophage protein 1 (548 aa).

Residues 1-12 (MSGDTGTPNQGG) show a composition bias toward polar residues. The tract at residues 1 to 38 (MSGDTGTPNQGGTRYGSISSPPSPGPQQAPPGGTYLSE) is disordered. The Cytoplasmic segment spans residues 1–55 (MSGDTGTPNQGGTRYGSISSPPSPGPQQAPPGGTYLSEKIPIPDTESGAFSLRKL). Residues 56-73 (WAFTGPGFLMSIAFLDPG) form a helical membrane-spanning segment. Over 74 to 82 (NIESDLQAG) the chain is Extracellular. The helical transmembrane segment at 83–102 (AVAGFKLLWVLLWATVLGLL) threads the bilayer. Residues 103-139 (CQRLAARLGVVTGKDLGEVCHLYYPKVPRTLLWLTIE) are Cytoplasmic-facing. Residues 140-160 (LAIVGSDMQEVIGTAIAFSLL) traverse the membrane as a helical segment. Residues 161–164 (SAGR) are Extracellular-facing. The helical transmembrane segment at 165 to 184 (IPLWGGVLITIVDTFFFLFL) threads the bilayer. The Cytoplasmic segment spans residues 185 to 193 (DNYGLRKLE). A helical transmembrane segment spans residues 194–214 (AFFGFLITIMALTFGYEYVVA). Residues 215-237 (RPAQGALLQGLFLPSCPGCGQPE) are Extracellular-facing. The chain crosses the membrane as a helical span at residues 238–256 (LLQAVGIVGAIIMPHNIYL). The Cytoplasmic segment spans residues 257–284 (HSSLVKSREVDRSRRADIREANMYFLIE). The chain crosses the membrane as a helical span at residues 285-304 (ATIALSVSFFINLFVMAVFG). Over 305-346 (QAFYKQTNQAAFNICANSSLHDYATIFPRDNLTVAVDIYQGG) the chain is Extracellular. 2 N-linked (GlcNAc...) asparagine glycosylation sites follow: asparagine 321 and asparagine 335. A helical transmembrane segment spans residues 347–366 (VILGCLFGPAALYIWAVGLL). Topologically, residues 367 to 397 (AAGQSSTMTGTYAGQFVMEGFLKLRWSRFAR) are cytoplasmic. Residues 398-415 (VLLTRSCAIPPTVLLAVF) form a helical membrane-spanning segment. At 416 to 426 (RDLQDLSGLND) the chain is on the extracellular side. Residues 427-447 (LLNVLQSLLLPFAVLPILTFT) traverse the membrane as a helical segment. Residues 448 to 463 (SMPALMQEFANGLVSK) lie on the Cytoplasmic side of the membrane. The helical transmembrane segment at 464–485 (IITSSIMVLVCAVNLYFVISYV) threads the bilayer. Over 486–493 (PSLPHPAY) the chain is Extracellular. The chain crosses the membrane as a helical span at residues 494–513 (FSLVALLAAAYLGLTTYLVW). The Cytoplasmic segment spans residues 514–548 (TCLITQGATRLAHSSHQRFLYGLPGEDQEEGRTSG).

This sequence belongs to the NRAMP family.

It localises to the late endosome membrane. It is found in the lysosome membrane. It catalyses the reaction Zn(2+)(in) + H(+)(out) = Zn(2+)(out) + H(+)(in). The catalysed reaction is Fe(2+)(in) + H(+)(out) = Fe(2+)(out) + H(+)(in). The enzyme catalyses Mn(2+)(in) + H(+)(out) = Mn(2+)(out) + H(+)(in). Its function is as follows. Macrophage-specific antiporter that fluxes metal ions in either direction against a proton gradient. Localized to late endosomal lysosomal membranes, delivers bivalent cations from the cytosol into these acidic compartments where they may directly affect antimicrobial activity. Involved in iron metabolism and host natural resistance to infection with intracellular parasites. Pathogen resistance involves sequestration of Fe(2+) and Mn(2+), cofactors of both prokaryotic and eukaryotic catalases and superoxide dismutases, not only to protect the macrophage against its own generation of reactive oxygen species, but to deny the cations to the pathogen for synthesis of its protective enzymes. This chain is Natural resistance-associated macrophage protein 1 (SLC11A1), found in Ovis aries (Sheep).